The sequence spans 266 residues: Short-chain dehydrogenase/reductase tropE (266 aa).

Residues Leu18, Asp69, and Asn96 each coordinate NADP(+). Residue Ser147 is the Proton donor of the active site. Residues Tyr181, Lys185, and Thr216 each coordinate NADP(+). The active-site Proton acceptor is Tyr181. Lys185 acts as the Lowers pKa of active site Tyr in catalysis.

This sequence belongs to the short-chain dehydrogenases/reductases (SDR) family.

It functions in the pathway secondary metabolite biosynthesis. In terms of biological role, short-chain dehydrogenase/reductase; part of the gene cluster that mediates the biosynthesis of the tropolone class of fungal maleic anhydrides. The pathway begins with the synthesis of 3-methylorcinaldehyde by the non-reducing polyketide synthase (PKS) tropA. 3-methylorcinaldehyde is the substrate for the FAD-dependent monooxygenase tropB to yield a dearomatized hydroxycyclohexadione. The 2-oxoglutarate-dependent dioxygenase tropC then performs the oxidative ring expansion to provide the first tropolone metabolite stipitaldehyde. Trop D converts stipitaldehyde into stipitacetal which is in turn converted to stipitalide by the short-chain dehydrogenase/reductase tropE. The next steps involve tropF, tropG, tropH, tropI and tropJ to form successive tropolone maleic anhydrides including stipitaldehydic, stipitatonic and stipitatic acids. The chain is Short-chain dehydrogenase/reductase tropE from Talaromyces stipitatus (strain ATCC 10500 / CBS 375.48 / QM 6759 / NRRL 1006) (Penicillium stipitatum).